Here is a 512-residue protein sequence, read N- to C-terminus: Histidine ammonia-lyase (512 aa).

The 5-imidazolinone (Ala-Gly) cross-link spans 143-145; it reads ASG. Ser144 is modified (2,3-didehydroalanine (Ser)).

It belongs to the PAL/histidase family. Post-translationally, contains an active site 4-methylidene-imidazol-5-one (MIO), which is formed autocatalytically by cyclization and dehydration of residues Ala-Ser-Gly.

It is found in the cytoplasm. The enzyme catalyses L-histidine = trans-urocanate + NH4(+). The protein operates within amino-acid degradation; L-histidine degradation into L-glutamate; N-formimidoyl-L-glutamate from L-histidine: step 1/3. This chain is Histidine ammonia-lyase, found in Ruegeria pomeroyi (strain ATCC 700808 / DSM 15171 / DSS-3) (Silicibacter pomeroyi).